The following is a 149-amino-acid chain: Transcriptional repressor NrdR (149 aa).

The segment at 3 to 34 (CPFCFAVDTKVIDSRLVGGGSSVRRRRQCLVC) is a zinc-finger region. The region spanning 49–139 (PRVVKSNDVR…VYRSFEDIKE (91 aa)) is the ATP-cone domain.

The protein belongs to the NrdR family. Zn(2+) serves as cofactor.

In terms of biological role, negatively regulates transcription of bacterial ribonucleotide reductase nrd genes and operons by binding to NrdR-boxes. The polypeptide is Transcriptional repressor NrdR (Shigella boydii serotype 18 (strain CDC 3083-94 / BS512)).